The following is a 126-amino-acid chain: Ribosome-binding factor A (126 aa).

It belongs to the RbfA family. Monomer. Binds 30S ribosomal subunits, but not 50S ribosomal subunits or 70S ribosomes.

It is found in the cytoplasm. In terms of biological role, one of several proteins that assist in the late maturation steps of the functional core of the 30S ribosomal subunit. Associates with free 30S ribosomal subunits (but not with 30S subunits that are part of 70S ribosomes or polysomes). Required for efficient processing of 16S rRNA. May interact with the 5'-terminal helix region of 16S rRNA. This is Ribosome-binding factor A from Azoarcus sp. (strain BH72).